Reading from the N-terminus, the 176-residue chain is Interleukin-7 (176 aa).

The signal sequence occupies residues M1 to S25. 3 cysteine pairs are disulfide-bonded: C27–C165, C58–C153, and C71–C116. Residues N94, N115, and N140 are each glycosylated (N-linked (GlcNAc...) asparagine). The interval S118–S143 is disordered.

It belongs to the IL-7/IL-9 family. In terms of assembly, interacts with IL7R and CSF2RG.

Its subcellular location is the secreted. Hematopoietic cytokine that plays an essential role in the development, expansion, and survival of naive and memory T-cells and B-cells thereby regulating the number of mature lymphocytes and maintaining lymphoid homeostasis. Mechanistically, exerts its biological effects through a receptor composed of IL7RA subunit and the cytokine receptor common subunit gamma/CSF2RG. Binding to the receptor leads to activation of various kinases including JAK1 or JAK3 depending on the cell type and subsequently propagation of signals through activation of several downstream signaling pathways including the PI3K/Akt/mTOR or the JAK-STAT5. The chain is Interleukin-7 (IL7) from Bos taurus (Bovine).